A 113-amino-acid chain; its full sequence is Antimicrobial peptide microplusin (113 aa).

The signal sequence occupies residues 1–19; it reads MKSLLVLALLAFGAVLVSA. 3 disulfide bridges follow: C25–C71, C38–C99, and C60–C65.

The protein localises to the secreted. In terms of biological role, has bacteriostatic activity against Gram-positive bacteria, but not against Gram-negative bacteria. Has fungistatic activity against some but not all fungi. Binds and sequesters copper and iron ions. Copper-chelating activity is crucial for antimicrobial activity against M.luteus. The chain is Antimicrobial peptide microplusin from Argas monolakensis (Mono lake bird tick).